Consider the following 458-residue polypeptide: F-box/FBD/LRR-repeat protein At1g78750 (458 aa).

One can recognise an F-box domain in the interval Val17–Phe67. LRR repeat units lie at residues Cys152–Ile183, Val184–Arg209, Val231–Asp258, Asp302–Ser327, and Phe345–Ser370. Positions Lys376–Leu428 constitute an FBD domain.

The chain is F-box/FBD/LRR-repeat protein At1g78750 from Arabidopsis thaliana (Mouse-ear cress).